Reading from the N-terminus, the 283-residue chain is Aspartate dehydrogenase domain-containing protein (283 aa).

Phosphoserine occurs at positions 20 and 168.

The protein belongs to the L-aspartate dehydrogenase family.

This Homo sapiens (Human) protein is Aspartate dehydrogenase domain-containing protein.